The sequence spans 433 residues: C2H2 type master regulator of conidiophore development brlA (433 aa).

2 disordered regions span residues 23-54 (PSECPSMTSSFSPLDSPTPTPTSLYSQGSMAS) and 238-268 (TFKSHTPSTPHRSVSMGTPSGSDTPVSRMSG). Residues 30–48 (TSSFSPLDSPTPTPTSLYS) show a composition bias toward low complexity. Positions 238 to 264 (TFKSHTPSTPHRSVSMGTPSGSDTPVS) are enriched in polar residues. C2H2-type zinc fingers lie at residues 321-345 (FKCKEPGCKGRFKRQEHLKRHMKSH) and 351-376 (HVCWVPGCHRAFSRSDNLNAHYTKTH). Positions 391-423 (ETSQDFDPDFRGQLTPDGRPIYGSKLEDSMPDC) are disordered.

The protein resides in the nucleus. Functionally, brlA, abaA and wetA are pivotal regulators of conidiophore development and conidium maturation. They act individually and together to regulate their own expression and that of numerous other sporulation-specific genes. Binds promoters of target genes at brlA response elements (BREs) containing the conserved sequence 5'-(C/A)(A/G)AGGG(G/A)-3'. The protein is C2H2 type master regulator of conidiophore development brlA of Penicillium camemberti (strain FM 013).